Here is a 95-residue protein sequence, read N- to C-terminus: Secretoglobin family 2A member 1 (95 aa).

The signal sequence occupies residues 1–18; sequence MKLVFLFLLVTIPICCYA. Residues Asn35 and Asn72 are each glycosylated (N-linked (GlcNAc...) asparagine).

Belongs to the secretoglobin family. Lipophilin subfamily. As to quaternary structure, prostatein is composed of three different peptides called C1, C2 and C3. These form covalent C1:C3 (F) and C2:C3 (S) heterodimers whose non-covalent association forms tetrameric (C1:C3/C3:C2) prostatein molecules. As to expression, expressed at very low level in ventral prostate.

The protein localises to the secreted. Functionally, part of prostatein which is the major secretory glycoprotein of ventral prostate gland. Steroid-binding protein; can bind non-polar steroids, cholesterol and a group of small proline-rich peptides. The chain is Secretoglobin family 2A member 1 from Rattus norvegicus (Rat).